Here is a 401-residue protein sequence, read N- to C-terminus: Anhydro-N-acetylmuramic acid kinase (401 aa).

25-32 (GTSLDGLD) contacts ATP.

This sequence belongs to the anhydro-N-acetylmuramic acid kinase family.

The enzyme catalyses 1,6-anhydro-N-acetyl-beta-muramate + ATP + H2O = N-acetyl-D-muramate 6-phosphate + ADP + H(+). It functions in the pathway amino-sugar metabolism; 1,6-anhydro-N-acetylmuramate degradation. It participates in cell wall biogenesis; peptidoglycan recycling. In terms of biological role, catalyzes the specific phosphorylation of 1,6-anhydro-N-acetylmuramic acid (anhMurNAc) with the simultaneous cleavage of the 1,6-anhydro ring, generating MurNAc-6-P. Is required for the utilization of anhMurNAc either imported from the medium or derived from its own cell wall murein, and thus plays a role in cell wall recycling. The polypeptide is Anhydro-N-acetylmuramic acid kinase (Pseudoalteromonas translucida (strain TAC 125)).